We begin with the raw amino-acid sequence, 179 residues long: Large ribosomal subunit protein uL6 (179 aa).

It belongs to the universal ribosomal protein uL6 family. Part of the 50S ribosomal subunit.

This protein binds to the 23S rRNA, and is important in its secondary structure. It is located near the subunit interface in the base of the L7/L12 stalk, and near the tRNA binding site of the peptidyltransferase center. In Finegoldia magna (strain ATCC 29328 / DSM 20472 / WAL 2508) (Peptostreptococcus magnus), this protein is Large ribosomal subunit protein uL6.